An 82-amino-acid polypeptide reads, in one-letter code: Small ribosomal subunit protein bS16 (82 aa).

The protein belongs to the bacterial ribosomal protein bS16 family.

This Proteus mirabilis (strain HI4320) protein is Small ribosomal subunit protein bS16.